The following is a 146-amino-acid chain: Phospholipase A2, membrane associated (146 aa).

The first 21 residues, 1 to 21 (MKVLLLLAVVIMAFGSIQVQG), serve as a signal peptide directing secretion. 7 cysteine pairs are disulfide-bonded: Cys47–Cys139, Cys49–Cys65, Cys64–Cys119, Cys70–Cys146, Cys71–Cys112, Cys80–Cys105, and Cys98–Cys110. Residues His48, Gly50, and Gly52 each contribute to the Ca(2+) site. Residue His68 is part of the active site. Asp69 is a Ca(2+) binding site. Residue Asp113 is part of the active site.

Belongs to the phospholipase A2 family. It depends on Ca(2+) as a cofactor.

The protein resides in the secreted. It localises to the cell membrane. The protein localises to the mitochondrion outer membrane. It carries out the reaction a 1,2-diacyl-sn-glycero-3-phosphoethanolamine + H2O = a 1-acyl-sn-glycero-3-phosphoethanolamine + a fatty acid + H(+). It catalyses the reaction 1-hexadecanoyl-2-(9Z-octadecenoyl)-sn-glycero-3-phosphoethanolamine + H2O = 1-hexadecanoyl-sn-glycero-3-phosphoethanolamine + (9Z)-octadecenoate + H(+). The catalysed reaction is 1-hexadecanoyl-2-(9Z,12Z-octadecadienoyl)-sn-glycero-3-phosphoethanolamine + H2O = 1-hexadecanoyl-sn-glycero-3-phosphoethanolamine + (9Z,12Z)-octadecadienoate + H(+). The enzyme catalyses 1-hexadecanoyl-2-(5Z,8Z,11Z,14Z-eicosatetraenoyl)-sn-glycero-3-phosphoethanolamine + H2O = 1-hexadecanoyl-sn-glycero-3-phosphoethanolamine + (5Z,8Z,11Z,14Z)-eicosatetraenoate + H(+). It carries out the reaction N-hexadecanoyl-1,2-di-(9Z-octadecenoyl)-sn-glycero-3-phosphoethanolamine + H2O = N-hexadecanoyl-1-(9Z-octadecenoyl)-sn-glycero-3-phosphoethanolamine + (9Z)-octadecenoate + H(+). It catalyses the reaction 1,2-dihexadecanoyl-sn-glycero-3-phospho-(1'-sn-glycerol) + H2O = 1-hexadecanoyl-sn-glycero-3-phospho-(1'-sn-glycerol) + hexadecanoate + H(+). The catalysed reaction is 1-hexadecanoyl-2-(9Z-octadecenoyl)-sn-glycero-3-phosphoglycerol + H2O = 1-hexadecanoyl-sn-glycero-3-phosphoglycerol + (9Z)-octadecenoate + H(+). The enzyme catalyses 1-hexadecanoyl-2-(9Z-octadecenoyl)-sn-glycero-3-phospho-(1'-sn-glycerol) + H2O = 1-hexadecanoyl-sn-glycero-3-phospho-(1'-sn-glycerol) + (9Z)-octadecenoate + H(+). It carries out the reaction a 1,2-diacyl-sn-glycero-3-phosphocholine + H2O = a 1-acyl-sn-glycero-3-phosphocholine + a fatty acid + H(+). It catalyses the reaction 1,2-dihexadecanoyl-sn-glycero-3-phosphocholine + H2O = 1-hexadecanoyl-sn-glycero-3-phosphocholine + hexadecanoate + H(+). The catalysed reaction is 1-hexadecanoyl-2-(9Z-octadecenoyl)-sn-glycero-3-phosphocholine + H2O = 1-hexadecanoyl-sn-glycero-3-phosphocholine + (9Z)-octadecenoate + H(+). The enzyme catalyses 1-hexadecanoyl-2-(9Z,12Z-octadecadienoyl)-sn-glycero-3-phosphocholine + H2O = (9Z,12Z)-octadecadienoate + 1-hexadecanoyl-sn-glycero-3-phosphocholine + H(+). It carries out the reaction 1-hexadecanoyl-2-(4Z,7Z,10Z,13Z,16Z,19Z-docosahexaenoyl)-sn-glycero-3-phosphocholine + H2O = (4Z,7Z,10Z,13Z,16Z,19Z)-docosahexaenoate + 1-hexadecanoyl-sn-glycero-3-phosphocholine + H(+). Its function is as follows. Secretory calcium-dependent phospholipase A2 that primarily targets extracellular phospholipids with implications in host antimicrobial defense, inflammatory response and tissue regeneration. Hydrolyzes the ester bond of the fatty acyl group attached at sn-2 position of phospholipids (phospholipase A2 activity) with preference for phosphatidylethanolamines and phosphatidylglycerols over phosphatidylcholines. Contributes to lipid remodeling of cellular membranes and generation of lipid mediators involved in pathogen clearance. Displays bactericidal activity against Gram-positive bacteria by directly hydrolyzing phospholipids of the bacterial membrane. Upon sterile inflammation, targets membrane phospholipids of extracellular mitochondria released from activated platelets, generating free unsaturated fatty acids such as arachidonate that is used by neighboring leukocytes to synthesize inflammatory eicosanoids such as leukotrienes. Simultaneously, by compromising mitochondrial membrane integrity, promotes the release in circulation of potent damage-associated molecular pattern molecules that activate the innate immune response. Plays a stem cell regulator role in the intestinal crypt. Within intracellular compartment mediates Paneth cell differentiation and its stem cell supporting functions by inhibiting Wnt signaling pathway in intestinal stem cell (ICS). Secreted in the intestinal lumen upon inflammation, acts in an autocrine way and promotes prostaglandin E2 synthesis that stimulates Wnt signaling pathway in ICS cells and tissue regeneration. May play a role in the biosynthesis of N-acyl ethanolamines that regulate energy metabolism and inflammation. Hydrolyzes N-acyl phosphatidylethanolamines to N-acyl lysophosphatidylethanolamines, which are further cleaved by a lysophospholipase D to release N-acyl ethanolamines. Independent of its catalytic activity, acts as a ligand for integrins. Binds to and activates integrins ITGAV:ITGB3, ITGA4:ITGB1 and ITGA5:ITGB1. Binds to a site (site 2) which is distinct from the classical ligand-binding site (site 1) and induces integrin conformational changes and enhanced ligand binding to site 1. Induces cell proliferation in an integrin-dependent manner. This is Phospholipase A2, membrane associated (Pla2g2a) from Rattus norvegicus (Rat).